Here is a 397-residue protein sequence, read N- to C-terminus: Vacuolar protein sorting-associated protein 37A (397 aa).

S18 carries the post-translational modification Phosphoserine. The VPS37 C-terminal domain occupies 308-397; sequence KSTFEKKMQR…AMHSQFHAPL (90 aa).

The protein belongs to the VPS37 family. As to quaternary structure, component of the ESCRT-I complex (endosomal sorting complex required for transport I) which consists of TSG101, VPS28, a VPS37 protein (VPS37A to -D) and MVB12A or MVB12B in a 1:1:1:1 stoichiometry. Interacts with TSG101, VPS28 and HGS. Component of an ESCRT-I complex (endosomal sorting complex required for transport I) which consists of TSG101, VPS28, VPS37A and UBAP1 in a 1:1:1:1 stoichiometry.

The protein localises to the late endosome membrane. Its subcellular location is the nucleus. Its function is as follows. Component of the ESCRT-I complex, a regulator of vesicular trafficking process. Required for the sorting of endocytic ubiquitinated cargos into multivesicular bodies. May be involved in cell growth and differentiation. The chain is Vacuolar protein sorting-associated protein 37A (Vps37a) from Mus musculus (Mouse).